The primary structure comprises 131 residues: Large ribosomal subunit protein bL17 (131 aa).

This sequence belongs to the bacterial ribosomal protein bL17 family. Part of the 50S ribosomal subunit. Contacts protein L32.

The polypeptide is Large ribosomal subunit protein bL17 (Sodalis glossinidius (strain morsitans)).